The sequence spans 136 residues: Small ribosomal subunit protein uS9 (136 aa).

It belongs to the universal ribosomal protein uS9 family.

The sequence is that of Small ribosomal subunit protein uS9 from Borrelia turicatae (strain 91E135).